A 300-amino-acid polypeptide reads, in one-letter code: Cell adhesion molecule CEACAM19 (300 aa).

The N-terminal stretch at 1 to 32 is a signal peptide; sequence MEIPMGTQGCFSKSLLLSASILVLWMLQGSQA. Topologically, residues 33–157 are extracellular; that stretch reads ALYIQKIPEQ…PSTHLPTNAG (125 aa). N104 carries N-linked (GlcNAc...) asparagine glycosylation. Residues 158–178 traverse the membrane as a helical segment; that stretch reads ILAATIIGSLAAGALLISCIA. Residues 179–300 lie on the Cytoplasmic side of the membrane; the sequence is YLLVTRNWRG…APYCQLVPTS (122 aa). The segment at 259–291 is disordered; it reads SINPARPLPTPPHLQAEPENHQYQQDLLNPDPA.

Belongs to the immunoglobulin superfamily. CEA family. In terms of tissue distribution, ubiquitous with highest expression in prostate, uterus, fetal brain, mammary gland, adrenal gland, skeletal muscle, small intestine, and kidney, and lower expression in lung, cerebellum, testis, liver, pancreas, bone marrow and ovary.

The protein localises to the membrane. The polypeptide is Cell adhesion molecule CEACAM19 (Homo sapiens (Human)).